Reading from the N-terminus, the 539-residue chain is Chaperonin GroEL (539 aa).

ATP contacts are provided by residues threonine 29–proline 32, aspartate 86–threonine 90, glycine 413, asparagine 476–alanine 478, and aspartate 492.

It belongs to the chaperonin (HSP60) family. As to quaternary structure, forms a cylinder of 14 subunits composed of two heptameric rings stacked back-to-back. Interacts with the co-chaperonin GroES.

It localises to the cytoplasm. The catalysed reaction is ATP + H2O + a folded polypeptide = ADP + phosphate + an unfolded polypeptide.. In terms of biological role, together with its co-chaperonin GroES, plays an essential role in assisting protein folding. The GroEL-GroES system forms a nano-cage that allows encapsulation of the non-native substrate proteins and provides a physical environment optimized to promote and accelerate protein folding. The polypeptide is Chaperonin GroEL (Leuconostoc mesenteroides subsp. mesenteroides (strain ATCC 8293 / DSM 20343 / BCRC 11652 / CCM 1803 / JCM 6124 / NCDO 523 / NBRC 100496 / NCIMB 8023 / NCTC 12954 / NRRL B-1118 / 37Y)).